Consider the following 510-residue polypeptide: NAD(P)H-quinone oxidoreductase subunit 2 B, chloroplastic (510 aa).

13 consecutive transmembrane segments (helical) span residues Leu24–Leu44, Ile57–Phe77, Ile99–Ile119, Met124–Cys144, Leu149–Tyr169, Tyr183–Gly203, Pro227–Ala247, Trp295–Ile315, Met323–Asp343, Tyr354–Leu374, Ala395–Phe415, Leu418–Leu438, and Leu482–Ile502.

The protein belongs to the complex I subunit 2 family. NDH is composed of at least 16 different subunits, 5 of which are encoded in the nucleus.

It localises to the plastid. It is found in the chloroplast thylakoid membrane. It catalyses the reaction a plastoquinone + NADH + (n+1) H(+)(in) = a plastoquinol + NAD(+) + n H(+)(out). It carries out the reaction a plastoquinone + NADPH + (n+1) H(+)(in) = a plastoquinol + NADP(+) + n H(+)(out). In terms of biological role, NDH shuttles electrons from NAD(P)H:plastoquinone, via FMN and iron-sulfur (Fe-S) centers, to quinones in the photosynthetic chain and possibly in a chloroplast respiratory chain. The immediate electron acceptor for the enzyme in this species is believed to be plastoquinone. Couples the redox reaction to proton translocation, and thus conserves the redox energy in a proton gradient. This is NAD(P)H-quinone oxidoreductase subunit 2 B, chloroplastic from Lotus japonicus (Lotus corniculatus var. japonicus).